We begin with the raw amino-acid sequence, 542 residues long: Chaperonin GroEL 1 (542 aa).

ATP contacts are provided by residues Thr29–Pro32, Asp86–Thr90, Gly413, Asn477–Ala479, and Asp493.

This sequence belongs to the chaperonin (HSP60) family. In terms of assembly, forms a cylinder of 14 subunits composed of two heptameric rings stacked back-to-back. Interacts with the co-chaperonin GroES.

It is found in the cytoplasm. The catalysed reaction is ATP + H2O + a folded polypeptide = ADP + phosphate + an unfolded polypeptide.. Functionally, together with its co-chaperonin GroES, plays an essential role in assisting protein folding. The GroEL-GroES system forms a nano-cage that allows encapsulation of the non-native substrate proteins and provides a physical environment optimized to promote and accelerate protein folding. This chain is Chaperonin GroEL 1, found in Kineococcus radiotolerans (strain ATCC BAA-149 / DSM 14245 / SRS30216).